A 141-amino-acid chain; its full sequence is Large ribosomal subunit protein bL21 (141 aa).

The tract at residues Ala-111 to Glu-141 is disordered. The span at Glu-118–Ala-133 shows a compositional bias: low complexity.

It belongs to the bacterial ribosomal protein bL21 family. Part of the 50S ribosomal subunit. Contacts protein L20.

This protein binds to 23S rRNA in the presence of protein L20. This is Large ribosomal subunit protein bL21 from Synechococcus sp. (strain JA-2-3B'a(2-13)) (Cyanobacteria bacterium Yellowstone B-Prime).